We begin with the raw amino-acid sequence, 836 residues long: Translation initiation factor IF-2 (836 aa).

Over residues Met1–Lys17 the composition is skewed to basic residues. Disordered stretches follow at residues Met1–Lys43 and Ala83–Ala240. Low complexity predominate over residues Thr18–Gly27. Residues Ala83 to Glu153 show a composition bias toward basic and acidic residues. Acidic residues predominate over residues Ala154 to Ser167. Residues Arg192–Lys202 show a composition bias toward basic residues. The span at Gly203–Phe229 shows a compositional bias: basic and acidic residues. In terms of domain architecture, tr-type G spans Thr335 to Thr505. The G1 stretch occupies residues Gly344–Thr351. Gly344–Thr351 provides a ligand contact to GTP. Residues Gly369–His373 are G2. The G3 stretch occupies residues Asp391 to Gly394. Residues Asp391 to His395 and Asn445 to Asp448 each bind GTP. The interval Asn445 to Asp448 is G4. Residues Ser481 to Lys483 form a G5 region.

It belongs to the TRAFAC class translation factor GTPase superfamily. Classic translation factor GTPase family. IF-2 subfamily.

It localises to the cytoplasm. In terms of biological role, one of the essential components for the initiation of protein synthesis. Protects formylmethionyl-tRNA from spontaneous hydrolysis and promotes its binding to the 30S ribosomal subunits. Also involved in the hydrolysis of GTP during the formation of the 70S ribosomal complex. This chain is Translation initiation factor IF-2, found in Haemophilus influenzae (strain PittEE).